The primary structure comprises 321 residues: Beta-ketoacyl-[acyl-carrier-protein] synthase III (321 aa).

Catalysis depends on residues Cys114 and His248. Positions 249-253 (QANKR) are ACP-binding. Asn278 is a catalytic residue.

It belongs to the thiolase-like superfamily. FabH family. In terms of assembly, homodimer.

It localises to the cytoplasm. It catalyses the reaction malonyl-[ACP] + acetyl-CoA + H(+) = 3-oxobutanoyl-[ACP] + CO2 + CoA. It participates in lipid metabolism; fatty acid biosynthesis. Catalyzes the condensation reaction of fatty acid synthesis by the addition to an acyl acceptor of two carbons from malonyl-ACP. Catalyzes the first condensation reaction which initiates fatty acid synthesis and may therefore play a role in governing the total rate of fatty acid production. Possesses both acetoacetyl-ACP synthase and acetyl transacylase activities. Its substrate specificity determines the biosynthesis of branched-chain and/or straight-chain of fatty acids. The chain is Beta-ketoacyl-[acyl-carrier-protein] synthase III from Sphingopyxis alaskensis (strain DSM 13593 / LMG 18877 / RB2256) (Sphingomonas alaskensis).